The primary structure comprises 331 residues: Holliday junction branch migration complex subunit RuvB (331 aa).

The large ATPase domain (RuvB-L) stretch occupies residues 1–186; the sequence is MAKTMMQDRL…FGIVQRLEFY (186 aa). ATP is bound by residues Ile25, Arg26, Gly67, Lys70, Thr71, Thr72, 133 to 135, Arg176, Tyr186, and Arg223; that span reads EDF. Mg(2+) is bound at residue Thr71. Residues 187 to 257 form a small ATPAse domain (RuvB-S) region; the sequence is NIADLTTIVS…IAGSALDMLA (71 aa). Positions 260 to 331 are head domain (RuvB-H); sequence RRGLDHLDRR…LTQMAIDQML (72 aa). DNA-binding residues include Arg296, Arg315, and Arg320.

Belongs to the RuvB family. As to quaternary structure, homohexamer. Forms an RuvA(8)-RuvB(12)-Holliday junction (HJ) complex. HJ DNA is sandwiched between 2 RuvA tetramers; dsDNA enters through RuvA and exits via RuvB. An RuvB hexamer assembles on each DNA strand where it exits the tetramer. Each RuvB hexamer is contacted by two RuvA subunits (via domain III) on 2 adjacent RuvB subunits; this complex drives branch migration. In the full resolvosome a probable DNA-RuvA(4)-RuvB(12)-RuvC(2) complex forms which resolves the HJ.

It localises to the cytoplasm. It catalyses the reaction ATP + H2O = ADP + phosphate + H(+). In terms of biological role, the RuvA-RuvB-RuvC complex processes Holliday junction (HJ) DNA during genetic recombination and DNA repair, while the RuvA-RuvB complex plays an important role in the rescue of blocked DNA replication forks via replication fork reversal (RFR). RuvA specifically binds to HJ cruciform DNA, conferring on it an open structure. The RuvB hexamer acts as an ATP-dependent pump, pulling dsDNA into and through the RuvAB complex. RuvB forms 2 homohexamers on either side of HJ DNA bound by 1 or 2 RuvA tetramers; 4 subunits per hexamer contact DNA at a time. Coordinated motions by a converter formed by DNA-disengaged RuvB subunits stimulates ATP hydrolysis and nucleotide exchange. Immobilization of the converter enables RuvB to convert the ATP-contained energy into a lever motion, pulling 2 nucleotides of DNA out of the RuvA tetramer per ATP hydrolyzed, thus driving DNA branch migration. The RuvB motors rotate together with the DNA substrate, which together with the progressing nucleotide cycle form the mechanistic basis for DNA recombination by continuous HJ branch migration. Branch migration allows RuvC to scan DNA until it finds its consensus sequence, where it cleaves and resolves cruciform DNA. This chain is Holliday junction branch migration complex subunit RuvB, found in Psychrobacter cryohalolentis (strain ATCC BAA-1226 / DSM 17306 / VKM B-2378 / K5).